A 626-amino-acid chain; its full sequence is MGRTQPSYTMAVNRELEKLERIIERLHSPILSLLLERVKEKVRYTQSASYDELVDPYNLVYFALIWALAEECEKMEEYVLDAYPIKGGVKLFLSNFKEKTIRTTFPVYTITDNPDIVLQHPEVRYYEKEKWKTLDGKEVKVYRFEVESLDAYYYMRKRLNVVNETPTVLSQTLYRLGIKPFRRFRSSDDEFPKVTIARVVPLDWYGESLKGKVFEVKINNEVRRFYEKPEVEVDIAECLGEACNYVKSNVKIRIEKKRSPVSAKGLIEWSFISLTPIHEIAYATIGKVLTINEAWVAFKRRIIIPKVVPRVEKLRRLEDIMMVDKGGLILFPQPGCYDNVYQVDFSSMYPSLIVKHNISAETVEACDDIKTELHSICLKEKGIIPEALQWLIERKSELKKIDEERAEAIKWILVASFGYLGYRNSLFGKIEAYEMVTYLARKTLRRTMEIAEEMGLRVLHGIIDSLVVKGDNVDKFIEKVEKETGLRLDYKRYNWIIFTITRNNTPYPTRYIANMNGEMIAKGLIRENMPNIVKSFLEDVLREFSSAKTCSDVKKLRIRDLFEHYRKRAINGEPIDYVIWIKDVPYVRGIKGFYEARLGYMGRDVNYYINYLKRVYEDVEEVMSRC.

This sequence belongs to the DNA polymerase type-B family.

The catalysed reaction is DNA(n) + a 2'-deoxyribonucleoside 5'-triphosphate = DNA(n+1) + diphosphate. In terms of biological role, this polymerase is devoid of exonuclease activity. This Saccharolobus solfataricus (strain ATCC 35092 / DSM 1617 / JCM 11322 / P2) (Sulfolobus solfataricus) protein is DNA polymerase 2 (dpo2).